Here is a 770-residue protein sequence, read N- to C-terminus: Glutamate carboxypeptidase 2 homolog (770 aa).

Residues 1-25 (MPYVGVGAQTVSTSLTGAPMVKAYI) lie on the Cytoplasmic side of the membrane. The helical; Signal-anchor for type II membrane protein transmembrane segment at 26–42 (AIAASLIFVFCIAALGV) threads the bilayer. At 43 to 770 (HHSERKFNKF…CVVNTLRDVI (728 aa)) the chain is on the extracellular side. 2 N-linked (GlcNAc...) asparagine glycosylation sites follow: Asn-175 and Asn-337. The catalytic stretch occupies residues 282–597 (SKKELFKGRT…QYWAELAKTF (316 aa)). 2 residues coordinate Zn(2+): His-387 and Asp-397. Asn-417 is a glycosylation site (N-linked (GlcNAc...) asparagine). Catalysis depends on Glu-435, which acts as the Nucleophile. Glu-436 and Asp-464 together coordinate Zn(2+). Residues Asn-469, Asn-546, and Asn-551 are each glycosylated (N-linked (GlcNAc...) asparagine). His-562 is a Zn(2+) binding site. 3 N-linked (GlcNAc...) asparagine glycosylation sites follow: Asn-579, Asn-606, and Asn-630.

It belongs to the peptidase M28 family. M28B subfamily. Zn(2+) is required as a cofactor.

The protein resides in the membrane. It carries out the reaction Release of an unsubstituted, C-terminal glutamyl residue, typically from Ac-Asp-Glu or folylpoly-gamma-glutamates.. This Caenorhabditis elegans protein is Glutamate carboxypeptidase 2 homolog.